The primary structure comprises 293 residues: Oxidoreductase R2 (293 aa).

The protein belongs to the asaB hydroxylase/desaturase family.

It participates in secondary metabolite biosynthesis. Its function is as follows. Oxidoreductase; part of the gene cluster that mediates the biosynthesis of squalestatin S1 (SQS1, also known as zaragozic acid A), a heavily oxidized fungal polyketide that offers potent cholesterol lowering activity by targeting squalene synthase (SS). SQS1 is composed of a 2,8-dioxobicyclic[3.2.1]octane-3,4,5-tricarboxyclic acid core that is connected to two lipophilic polyketide arms. These initial steps feature the priming of an unusual benzoic acid starter unit onto the highly reducing polyketide synthase pks2, followed by oxaloacetate extension and product release to generate a tricarboxylic acid containing product. The phenylalanine ammonia lyase (PAL) M7 and the acyl-CoA ligase M9 are involved in transforming phenylalanine into benzoyl-CoA. The citrate synthase-like protein R3 is involved in connecting the C-alpha-carbons of the hexaketide chain and oxaloacetate to afford the tricarboxylic acid unit. The potential hydrolytic enzymes, M8 and M10, are in close proximity to pks2 and may participate in product release. On the other side, the tetraketide arm is synthesized by a the squalestatin tetraketide synthase pks1 and enzymatically esterified to the core in the last biosynthetic step, by the acetyltransferase M4. The biosynthesis of the tetraketide must involve 3 rounds of chain extension. After the first and second rounds methyl-transfer occurs, and in all rounds of extension the ketoreductase and dehydratase are active. The enoyl reductase and C-MeT of pks1 are not active in the final round of extension. The acetyltransferase M4 appears to have a broad substrate selectivity for its acyl CoA substrate, allowing the in vitro synthesis of novel squalestatins. The biosynthesis of SQS1 requires several oxidative steps likely performed by oxidoreductases M1, R1 and R2. Finally, in support of the identification of the cluster as being responsible for SQS1 production, the cluster contains a gene encoding a putative squalene synthase (SS) R6, suggesting a likely mechanism for self-resistance. This chain is Oxidoreductase R2, found in Phoma sp. (strain ATCC 20986 / MF5453).